The chain runs to 329 residues: L-arabinose-binding periplasmic protein (329 aa).

A signal peptide spans 1-23 (MHKFTKALAAIGLAAVMSQSAMA).

This sequence belongs to the bacterial solute-binding protein 2 family.

Its subcellular location is the periplasm. Involved in the high-affinity L-arabinose membrane transport system. Binds with high affinity to arabinose, but can also bind D-galactose (approximately 2-fold reduction) and D-fucose (approximately 40-fold reduction). The chain is L-arabinose-binding periplasmic protein (araF) from Escherichia coli (strain K12).